Consider the following 387-residue polypeptide: UDP-N-acetylglucosamine--N-acetylmuramyl-(pentapeptide) pyrophosphoryl-undecaprenol N-acetylglucosamine transferase (387 aa).

Positions methionine 1–alanine 22 are disordered. UDP-N-acetyl-alpha-D-glucosamine-binding positions include threonine 41–glycine 43, asparagine 158, arginine 194, serine 222, isoleucine 276, and glutamine 321.

Belongs to the glycosyltransferase 28 family. MurG subfamily.

Its subcellular location is the cell inner membrane. It carries out the reaction di-trans,octa-cis-undecaprenyl diphospho-N-acetyl-alpha-D-muramoyl-L-alanyl-D-glutamyl-meso-2,6-diaminopimeloyl-D-alanyl-D-alanine + UDP-N-acetyl-alpha-D-glucosamine = di-trans,octa-cis-undecaprenyl diphospho-[N-acetyl-alpha-D-glucosaminyl-(1-&gt;4)]-N-acetyl-alpha-D-muramoyl-L-alanyl-D-glutamyl-meso-2,6-diaminopimeloyl-D-alanyl-D-alanine + UDP + H(+). It functions in the pathway cell wall biogenesis; peptidoglycan biosynthesis. In terms of biological role, cell wall formation. Catalyzes the transfer of a GlcNAc subunit on undecaprenyl-pyrophosphoryl-MurNAc-pentapeptide (lipid intermediate I) to form undecaprenyl-pyrophosphoryl-MurNAc-(pentapeptide)GlcNAc (lipid intermediate II). The polypeptide is UDP-N-acetylglucosamine--N-acetylmuramyl-(pentapeptide) pyrophosphoryl-undecaprenol N-acetylglucosamine transferase (Polaromonas sp. (strain JS666 / ATCC BAA-500)).